Consider the following 678-residue polypeptide: WD repeat-containing protein 48 (678 aa).

WD repeat units lie at residues 28-67 (YNRN…QDPY), 73-112 (HHTD…CMST), 115-154 (THKD…ALTA), 166-205 (GNKD…KLMK), 208-247 (GHTD…CIAT), 250-289 (VHDE…IRVL), 292-334 (EEKA…NFRA), and 358-452 (KGGA…GFSS). Positions 608–629 (LDNESQTTSSSNNEKAGEQEKE) are disordered. The segment covering 610–621 (NESQTTSSSNNE) has biased composition (low complexity).

Belongs to the WD repeat WDR48 family.

It is found in the nucleus. It localises to the cytoplasm. Its subcellular location is the lysosome. The protein resides in the late endosome. In terms of biological role, regulator of deubiquitinating complexes, which acts as a strong activator of USP1, USP12 and USP46. Enhances the USP1-mediated deubiquitination of FANCD2; USP1 being almost inactive by itself. Activates deubiquitination by increasing the catalytic turnover without increasing the affinity of deubiquitinating enzymes for the substrate. Also activates deubiquitinating activity of complexes containing USP12. Docks at the distal end of the USP12 fingers domain and induces a cascade of structural changes leading to the activation of the enzyme. Together with RAD51AP1, promotes DNA repair by stimulating RAD51-mediated homologous recombination. Binds single-stranded DNA (ssDNA) and double-stranded DNA (dsDNA). DNA-binding is required both for USP1-mediated deubiquitination of FANCD2 and stimulation of RAD51-mediated homologous recombination: both WDR48/UAF1 and RAD51AP1 have coordinated role in DNA-binding during these processes. Together with ATAD5 and by regulating USP1 activity, has a role in PCNA-mediated translesion synthesis (TLS) by deubiquitinating monoubiquitinated PCNA. Together with ATAD5, has a role in recruiting RAD51 to stalled forks during replication stress. This Gallus gallus (Chicken) protein is WD repeat-containing protein 48 (WDR48).